Here is a 425-residue protein sequence, read N- to C-terminus: Dihydroorotase (425 aa).

Positions 58 and 60 each coordinate Zn(2+). Residues 60–62 and N92 contribute to the substrate site; that span reads HFR. Residues D150, H177, and H230 each coordinate Zn(2+). Position 276 (N276) interacts with substrate. D303 is a Zn(2+) binding site. D303 is an active-site residue. Residues H307 and 321 to 322 each bind substrate; that span reads FG.

It belongs to the metallo-dependent hydrolases superfamily. DHOase family. Class I DHOase subfamily. The cofactor is Zn(2+).

The enzyme catalyses (S)-dihydroorotate + H2O = N-carbamoyl-L-aspartate + H(+). The protein operates within pyrimidine metabolism; UMP biosynthesis via de novo pathway; (S)-dihydroorotate from bicarbonate: step 3/3. Catalyzes the reversible cyclization of carbamoyl aspartate to dihydroorotate. This is Dihydroorotase from Pediococcus pentosaceus (strain ATCC 25745 / CCUG 21536 / LMG 10740 / 183-1w).